Reading from the N-terminus, the 417-residue chain is Peptidyl-Asp metalloendopeptidase (417 aa).

An N-terminal signal peptide occupies residues 1–25 (MLSRSIGKAAGGLVLGLSVAAAAHA). Zn(2+) is bound at residue H327. E328 is an active-site residue. H331 and H337 together coordinate Zn(2+).

Belongs to the peptidase M72 family. Zn(2+) is required as a cofactor.

It catalyses the reaction Cleavage of Xaa-|-Asp, Xaa-|-Glu and Xaa-|-cysteic acid bonds.. Its function is as follows. Metalloprotease, specifically cleaves on the N-terminal side of aspartyl, glutamyl and cysteic acid residues. The protein is Peptidyl-Asp metalloendopeptidase of Stenotrophomonas maltophilia (strain R551-3).